The sequence spans 164 residues: ATP synthase subunit b 2 (164 aa).

A helical transmembrane segment spans residues 4-24 (TFWAFVGLVLFLALLVYFEVP).

Belongs to the ATPase B chain family. F-type ATPases have 2 components, F(1) - the catalytic core - and F(0) - the membrane proton channel. F(1) has five subunits: alpha(3), beta(3), gamma(1), delta(1), epsilon(1). F(0) has three main subunits: a(1), b(2) and c(10-14). The alpha and beta chains form an alternating ring which encloses part of the gamma chain. F(1) is attached to F(0) by a central stalk formed by the gamma and epsilon chains, while a peripheral stalk is formed by the delta and b chains.

Its subcellular location is the cell inner membrane. In terms of biological role, f(1)F(0) ATP synthase produces ATP from ADP in the presence of a proton or sodium gradient. F-type ATPases consist of two structural domains, F(1) containing the extramembraneous catalytic core and F(0) containing the membrane proton channel, linked together by a central stalk and a peripheral stalk. During catalysis, ATP synthesis in the catalytic domain of F(1) is coupled via a rotary mechanism of the central stalk subunits to proton translocation. Its function is as follows. Component of the F(0) channel, it forms part of the peripheral stalk, linking F(1) to F(0). In Bartonella henselae (strain ATCC 49882 / DSM 28221 / CCUG 30454 / Houston 1) (Rochalimaea henselae), this protein is ATP synthase subunit b 2.